We begin with the raw amino-acid sequence, 411 residues long: Phosphopentomutase (411 aa).

The Mn(2+) site is built by Asp-14, Asp-306, His-311, Asp-347, His-348, and His-359.

This sequence belongs to the phosphopentomutase family. Mn(2+) serves as cofactor.

Its subcellular location is the cytoplasm. It catalyses the reaction 2-deoxy-alpha-D-ribose 1-phosphate = 2-deoxy-D-ribose 5-phosphate. The catalysed reaction is alpha-D-ribose 1-phosphate = D-ribose 5-phosphate. The protein operates within carbohydrate degradation; 2-deoxy-D-ribose 1-phosphate degradation; D-glyceraldehyde 3-phosphate and acetaldehyde from 2-deoxy-alpha-D-ribose 1-phosphate: step 1/2. Its function is as follows. Isomerase that catalyzes the conversion of deoxy-ribose 1-phosphate (dRib-1-P) and ribose 1-phosphate (Rib-1-P) to deoxy-ribose 5-phosphate (dRib-5-P) and ribose 5-phosphate (Rib-5-P), respectively. The chain is Phosphopentomutase from Lactococcus lactis subsp. cremoris (strain SK11).